The chain runs to 315 residues: tRNA dimethylallyltransferase (315 aa).

Residue 14–21 (GPTASGKT) coordinates ATP. 16 to 21 (TASGKT) provides a ligand contact to substrate. Interaction with substrate tRNA stretches follow at residues 39-42 (DSAL), 163-167 (QRIQR), and 248-253 (RCVGYR).

The protein belongs to the IPP transferase family. As to quaternary structure, monomer. Mg(2+) is required as a cofactor.

The catalysed reaction is adenosine(37) in tRNA + dimethylallyl diphosphate = N(6)-dimethylallyladenosine(37) in tRNA + diphosphate. Catalyzes the transfer of a dimethylallyl group onto the adenine at position 37 in tRNAs that read codons beginning with uridine, leading to the formation of N6-(dimethylallyl)adenosine (i(6)A). The polypeptide is tRNA dimethylallyltransferase (Paraburkholderia phytofirmans (strain DSM 17436 / LMG 22146 / PsJN) (Burkholderia phytofirmans)).